Reading from the N-terminus, the 874-residue chain is Probable inorganic carbon transporter subunit DabA (874 aa).

Zn(2+) is bound by residues C398, D400, H580, and C595.

This sequence belongs to the inorganic carbon transporter (TC 9.A.2) DabA family. In terms of assembly, forms a complex with DabB. The cofactor is Zn(2+).

The protein localises to the cell membrane. Part of an energy-coupled inorganic carbon pump. This Bacillus anthracis (strain A0248) protein is Probable inorganic carbon transporter subunit DabA.